The sequence spans 929 residues: DNA mismatch repair protein MutS (929 aa).

A disordered region spans residues 22–46 (PAAPRSTGSAAAPPPSPAVLDDRSG). The span at 23 to 32 (AAPRSTGSAA) shows a compositional bias: low complexity. An ATP-binding site is contributed by 678–685 (GPNMAGKS).

Belongs to the DNA mismatch repair MutS family.

In terms of biological role, this protein is involved in the repair of mismatches in DNA. It is possible that it carries out the mismatch recognition step. This protein has a weak ATPase activity. This Rhodospirillum rubrum (strain ATCC 11170 / ATH 1.1.1 / DSM 467 / LMG 4362 / NCIMB 8255 / S1) protein is DNA mismatch repair protein MutS.